The following is a 331-amino-acid chain: DNA-directed RNA polymerase subunit alpha (331 aa).

The interval 1-226 (MLIAQRPTLT…ELFGLCRELN (226 aa)) is alpha N-terminal domain (alpha-NTD). An alpha C-terminal domain (alpha-CTD) region spans residues 243–331 (TNPEMAVPIE…GGTFFSPEDE (89 aa)).

The protein belongs to the RNA polymerase alpha chain family. As to quaternary structure, homodimer. The RNAP catalytic core consists of 2 alpha, 1 beta, 1 beta' and 1 omega subunit. When a sigma factor is associated with the core the holoenzyme is formed, which can initiate transcription.

It carries out the reaction RNA(n) + a ribonucleoside 5'-triphosphate = RNA(n+1) + diphosphate. Its function is as follows. DNA-dependent RNA polymerase catalyzes the transcription of DNA into RNA using the four ribonucleoside triphosphates as substrates. The polypeptide is DNA-directed RNA polymerase subunit alpha (Bifidobacterium longum (strain NCC 2705)).